Consider the following 392-residue polypeptide: Queuine tRNA-ribosyltransferase (392 aa).

Catalysis depends on D93, which acts as the Proton acceptor. Substrate contacts are provided by residues D93–Y97, D147, Q189, and G216. Positions G247–D253 are RNA binding. The active-site Nucleophile is D266. Positions T271–R275 are RNA binding; important for wobble base 34 recognition. C304, C306, C309, and H335 together coordinate Zn(2+).

The protein belongs to the queuine tRNA-ribosyltransferase family. As to quaternary structure, homodimer. Within each dimer, one monomer is responsible for RNA recognition and catalysis, while the other monomer binds to the replacement base PreQ1. Requires Zn(2+) as cofactor.

It catalyses the reaction 7-aminomethyl-7-carbaguanine + guanosine(34) in tRNA = 7-aminomethyl-7-carbaguanosine(34) in tRNA + guanine. Its pathway is tRNA modification; tRNA-queuosine biosynthesis. Catalyzes the base-exchange of a guanine (G) residue with the queuine precursor 7-aminomethyl-7-deazaguanine (PreQ1) at position 34 (anticodon wobble position) in tRNAs with GU(N) anticodons (tRNA-Asp, -Asn, -His and -Tyr). Catalysis occurs through a double-displacement mechanism. The nucleophile active site attacks the C1' of nucleotide 34 to detach the guanine base from the RNA, forming a covalent enzyme-RNA intermediate. The proton acceptor active site deprotonates the incoming PreQ1, allowing a nucleophilic attack on the C1' of the ribose to form the product. After dissociation, two additional enzymatic reactions on the tRNA convert PreQ1 to queuine (Q), resulting in the hypermodified nucleoside queuosine (7-(((4,5-cis-dihydroxy-2-cyclopenten-1-yl)amino)methyl)-7-deazaguanosine). The chain is Queuine tRNA-ribosyltransferase from Dehalococcoides mccartyi (strain ATCC BAA-2266 / KCTC 15142 / 195) (Dehalococcoides ethenogenes (strain 195)).